The following is a 430-amino-acid chain: Adenylosuccinate synthetase (430 aa).

Residues 11 to 17 and 39 to 41 contribute to the GTP site; these read GDEGKGK and GHS. The active-site Proton acceptor is D12. Residues D12 and G39 each coordinate Mg(2+). Residues 12 to 15, 37 to 40, T129, R143, N221, T236, and R300 each bind IMP; these read DEGK and NAGH. H40 serves as the catalytic Proton donor. Position 296–302 (296–302) interacts with substrate; that stretch reads VSTGRKR. GTP is bound by residues R302, 328 to 330, and 412 to 414; these read KLD and GTG.

It belongs to the adenylosuccinate synthetase family. As to quaternary structure, homodimer. Mg(2+) is required as a cofactor.

The protein localises to the cytoplasm. The catalysed reaction is IMP + L-aspartate + GTP = N(6)-(1,2-dicarboxyethyl)-AMP + GDP + phosphate + 2 H(+). The protein operates within purine metabolism; AMP biosynthesis via de novo pathway; AMP from IMP: step 1/2. Plays an important role in the de novo pathway and in the salvage pathway of purine nucleotide biosynthesis. Catalyzes the first committed step in the biosynthesis of AMP from IMP. The sequence is that of Adenylosuccinate synthetase from Sordaria macrospora (strain ATCC MYA-333 / DSM 997 / K(L3346) / K-hell).